A 237-amino-acid polypeptide reads, in one-letter code: Isoprenyl transferase (237 aa).

Asp-14 is a catalytic residue. Asp-14 provides a ligand contact to Mg(2+). Substrate contacts are provided by residues 15 to 18 (GNGR), Trp-19, Arg-27, His-31, and 59 to 61 (STE). Asn-62 serves as the catalytic Proton acceptor. Substrate is bound by residues Trp-63, Arg-65, Arg-184, and 190-192 (RIS). Position 203 (Glu-203) interacts with Mg(2+).

This sequence belongs to the UPP synthase family. Homodimer. Mg(2+) is required as a cofactor.

Its function is as follows. Catalyzes the condensation of isopentenyl diphosphate (IPP) with allylic pyrophosphates generating different type of terpenoids. The chain is Isoprenyl transferase from Helicobacter hepaticus (strain ATCC 51449 / 3B1).